Consider the following 83-residue polypeptide: MLVLTRRVGEKIVIGEDIVITVLKIEGNSVKIGIEAPRHVKILREELYEELKSENIKASEVSKDDLKGVLKNDKGYKGPGTSS.

Belongs to the CsrA/RsmA family. Homodimer; the beta-strands of each monomer intercalate to form a hydrophobic core, while the alpha-helices form wings that extend away from the core.

The protein localises to the cytoplasm. Functionally, a translational regulator that binds mRNA to regulate translation initiation and/or mRNA stability. Usually binds in the 5'-UTR at or near the Shine-Dalgarno sequence preventing ribosome-binding, thus repressing translation. Its main target seems to be the major flagellin gene, while its function is anatagonized by FliW. This Thermotoga petrophila (strain ATCC BAA-488 / DSM 13995 / JCM 10881 / RKU-1) protein is Translational regulator CsrA.